The primary structure comprises 447 residues: Tubulin beta-2 chain (447 aa).

Gln11, Glu69, Ser138, Gly142, Thr143, Gly144, Asn204, and Asn226 together coordinate GTP. Mg(2+) is bound at residue Glu69. Residues 419–428 (VSEYQQYQDA) show a composition bias toward polar residues. A disordered region spans residues 419–447 (VSEYQQYQDATSDEEGEYEDEDQEPEEDM). Residues 429–447 (TSDEEGEYEDEDQEPEEDM) show a composition bias toward acidic residues.

The protein belongs to the tubulin family. In terms of assembly, dimer of alpha and beta chains. A typical microtubule is a hollow water-filled tube with an outer diameter of 25 nm and an inner diameter of 15 nM. Alpha-beta heterodimers associate head-to-tail to form protofilaments running lengthwise along the microtubule wall with the beta-tubulin subunit facing the microtubule plus end conferring a structural polarity. Microtubules usually have 13 protofilaments but different protofilament numbers can be found in some organisms and specialized cells. Mg(2+) is required as a cofactor.

The protein resides in the cytoplasm. It localises to the cytoskeleton. In terms of biological role, tubulin is the major constituent of microtubules, a cylinder consisting of laterally associated linear protofilaments composed of alpha- and beta-tubulin heterodimers. Microtubules grow by the addition of GTP-tubulin dimers to the microtubule end, where a stabilizing cap forms. Below the cap, tubulin dimers are in GDP-bound state, owing to GTPase activity of alpha-tubulin. This Triticum aestivum (Wheat) protein is Tubulin beta-2 chain (TUBB2).